Reading from the N-terminus, the 477-residue chain is Ribosomal RNA small subunit methyltransferase F (477 aa).

S-adenosyl-L-methionine contacts are provided by residues 125-131, Glu-149, Asp-176, and Asp-194; that span reads AAAPGSK. Cys-247 serves as the catalytic Nucleophile.

The protein belongs to the class I-like SAM-binding methyltransferase superfamily. RsmB/NOP family.

It is found in the cytoplasm. It carries out the reaction cytidine(1407) in 16S rRNA + S-adenosyl-L-methionine = 5-methylcytidine(1407) in 16S rRNA + S-adenosyl-L-homocysteine + H(+). Functionally, specifically methylates the cytosine at position 1407 (m5C1407) of 16S rRNA. In Klebsiella pneumoniae (strain 342), this protein is Ribosomal RNA small subunit methyltransferase F.